The sequence spans 433 residues: Schlafen-like protein 2 (433 aa).

Positions 1 to 168 constitute a B30.2/SPRY domain; it reads MADTSPRESK…LSVNFGSQPF (168 aa). The tract at residues 199–400 is SLFN-like fold; sequence EHVVVKLPFA…RRMASNKCVY (202 aa). Residues E211 and E216 contribute to the active site.

Belongs to the Schlafen family. As to quaternary structure, component of the trimeric PUCH (precursor of 21U RNA 5'-end cleavage holoenzyme) complex; consisting of tofu-1, tofu-2 and either slfl-3 or slfl-4. Within the complex, interacts (via N-terminus) with tofu-1 (via N-terminus); the interaction stabilizes tofu-2 and may form a functional nuclease. Within the complex, interacts (via N-terminus) with slfl-3 (via N-terminus); the presence of tofu-1 is required for this interaction. The cofactor is Mg(2+). As to expression, expressed in the germline.

The protein localises to the cytoplasm. The protein resides in the mitochondrion. With respect to regulation, inhibited by ethylenediaminetetraacetic acid (EDTA). Functionally, component of the trimeric PUCH (precursor of 21U RNA 5'-end cleavage holoenzyme) complex, that acts as an endoribonuclease processing the 5'-end of precursor Piwi-interacting RNAs (piRNAs). The PUCH complex consists of tofu-1, tofu-2 and either slfl-3 or slfl-4, with tofu-2 exhibiting endoribonuclease activity. PUCH-mediated processing strictly requires a 7-methyl-G cap (m7 G-cap) and an uracil at position three (U3). PUCH also exhibits a strict bias for piRNA precursors with an A or G at position 1. Mature piRNA production is enhanced by the interaction of PUCH with the PETISCO complex, which is stabilizing piRNA precursors and allows their processing by PUCH. This Caenorhabditis elegans protein is Schlafen-like protein 2.